A 1410-amino-acid chain; its full sequence is Endoribonuclease Dicer homolog 2a (1410 aa).

A compositionally biased stretch (gly residues) spans 1–15 (MGGPLTAAGGRGDGG). The tract at residues 1 to 30 (MGGPLTAAGGRGDGGAKAVEPLRPPPPPDP) is disordered. One can recognise a Helicase ATP-binding domain in the interval 41 to 222 (ALERAVRGNT…HNYSKQISEI (182 aa)). An ATP-binding site is contributed by 54 to 61 (LETGSGKT). The DECH box signature appears at 163-166 (DECH). The Helicase C-terminal domain maps to 388–561 (TLLQYRHMQD…DTYYRVESTR (174 aa)). The 87-residue stretch at 569 to 655 (SVPLIHFFCS…LPELDVPCDE (87 aa)) folds into the Dicer dsRNA-binding fold domain. One can recognise a PAZ domain in the interval 827–942 (KDIDLLQTKD…LPPELCRIIM (116 aa)). RNase III domains are found at residues 969 to 1124 (SVKL…STAG) and 1161 to 1308 (VRSL…LDSK). 3 residues coordinate Mg(2+): glutamate 1200, aspartate 1294, and glutamate 1297. Residues 1334 to 1400 (DPVKGLQEFC…SKAVLKDLIA (67 aa)) enclose the DRBM domain.

This sequence belongs to the helicase family. Dicer subfamily. May interact with ARGONAUTE1 or PINHEAD through their common PAZ domains. It depends on Mg(2+) as a cofactor. The cofactor is Mn(2+).

Its subcellular location is the nucleus. Its function is as follows. Probably involved in the RNA silencing pathway. May cleave double-stranded RNA to produce short 21-24 nucleotides (nt) RNAs which target the selective destruction of complementary RNAs. This chain is Endoribonuclease Dicer homolog 2a (DCL2A), found in Oryza sativa subsp. japonica (Rice).